Consider the following 365-residue polypeptide: MTRLTLALDVMGGDFGPSVTVPAALQALNSNSQLTLLLVGDPDAITPLLAKADFEQRSRLQIIPAQSVIASDARPAQAIRSSRGSSMRVALELVKEGRAQACVSAGNTGALMGLAKLLLKPIEGIERPALVTVLPHQQKGKTVVLDLGANVDCDSTMLVQFAVMGAVLAEEVVGIANPRVALLNIGEEEMKGLGSIRDAAAVLKTLPSLNYIGYLEANELLTGKTDVLVCDGFTGNVTLKTMEGVVRMFLSLLKSQGEGKKRSWWLLLLKRWLQKSLARRFSHLNPDQYNGACLLGLRGSVIKSHGAANQRAFSVAIEQAVQAVQRQIPQRIAARLESLYPAGFELPESDSDVNARQQSGTNGHD.

The protein belongs to the PlsX family. Homodimer. Probably interacts with PlsY.

It localises to the cytoplasm. The enzyme catalyses a fatty acyl-[ACP] + phosphate = an acyl phosphate + holo-[ACP]. It functions in the pathway lipid metabolism; phospholipid metabolism. Catalyzes the reversible formation of acyl-phosphate (acyl-PO(4)) from acyl-[acyl-carrier-protein] (acyl-ACP). This enzyme utilizes acyl-ACP as fatty acyl donor, but not acyl-CoA. The protein is Phosphate acyltransferase of Klebsiella pneumoniae subsp. pneumoniae (strain ATCC 700721 / MGH 78578).